The primary structure comprises 232 residues: Large ribosomal subunit protein uL1 (232 aa).

Belongs to the universal ribosomal protein uL1 family. As to quaternary structure, part of the 50S ribosomal subunit.

Binds directly to 23S rRNA. The L1 stalk is quite mobile in the ribosome, and is involved in E site tRNA release. Functionally, protein L1 is also a translational repressor protein, it controls the translation of the L11 operon by binding to its mRNA. The polypeptide is Large ribosomal subunit protein uL1 (Rhizobium rhizogenes (strain K84 / ATCC BAA-868) (Agrobacterium radiobacter)).